Consider the following 98-residue polypeptide: NADH-ubiquinone oxidoreductase chain 4L (98 aa).

3 helical membrane passes run 1 to 21 (MSLT…GLLL), 29 to 49 (SLLC…MVIL), and 61 to 81 (IILL…LVMV).

The protein belongs to the complex I subunit 4L family. Core subunit of respiratory chain NADH dehydrogenase (Complex I) which is composed of 45 different subunits.

It is found in the mitochondrion inner membrane. It carries out the reaction a ubiquinone + NADH + 5 H(+)(in) = a ubiquinol + NAD(+) + 4 H(+)(out). Functionally, core subunit of the mitochondrial membrane respiratory chain NADH dehydrogenase (Complex I) which catalyzes electron transfer from NADH through the respiratory chain, using ubiquinone as an electron acceptor. Part of the enzyme membrane arm which is embedded in the lipid bilayer and involved in proton translocation. This is NADH-ubiquinone oxidoreductase chain 4L (MT-ND4L) from Platyrrhinus helleri (Heller's broad-nosed bat).